The primary structure comprises 188 residues: GTPase KRas (188 aa).

Residues 10–18 (GAGGVGKSA), 29–35 (VDEYDPT), 59–60 (AG), and 116–119 (NKCD) each bind GTP. An Effector region motif is present at residues 32-40 (YDPTIEDSY). The segment at 167 to 188 (KEKMSKEGKKKKKKSKTKCVLM) is disordered. Cys185 carries the post-translational modification Cysteine methyl ester. A lipid anchor (S-farnesyl cysteine) is attached at Cys185. A propeptide spans 186–188 (VLM) (removed in mature form).

This sequence belongs to the small GTPase superfamily. Ras family.

It is found in the cell membrane. It localises to the cytoplasm. It catalyses the reaction GTP + H2O = GDP + phosphate + H(+). Its activity is regulated as follows. Alternates between an inactive form bound to GDP and an active form bound to GTP. Activated by a guanine nucleotide-exchange factor (GEF) and inactivated by a GTPase-activating protein (GAP). Ras proteins bind GDP/GTP and possess intrinsic GTPase activity. Plays an important role in the regulation of cell proliferation. May play a role in promoting oncogenic events by inducing transcriptional silencing of tumor suppressor genes (TSGs). This Cyprinus carpio (Common carp) protein is GTPase KRas (kras).